The primary structure comprises 55 residues: Large ribosomal subunit protein bL33 (55 aa).

Belongs to the bacterial ribosomal protein bL33 family.

The sequence is that of Large ribosomal subunit protein bL33 from Klebsiella pneumoniae (strain 342).